The following is a 388-amino-acid chain: MILGWTQRIFTLLVVVTLLAACADEVVNPPKELADIEEKFSVQSSWVEVIGQGDEEKFNSLSPALWQDKIITADVDGLITAFDIKSGKVIWETNLKQPLSGGVTANAGLVAVGTKNAQVHVLDVNDGKQLWHVNVTTEVLAKPAISDGRLVVRTPDGRIFAYSLATQKQEWFYDRIIPNLTLRGTSAAVATSGVVITGFANGKMAAFNLRTGDMLWEQSISAPRGSSEISRIVDVDSTPVVYSNYLYAAGFNGFAIAMDLTNGRYLWREDASVTEELLVDARRVYLVDTKGRIVALDRITGEEVWTQEGLLYRKPTGAADNQDYVVVGDFEGYLHWLDKSTGEFVARIHLDRYGIGGTPIVTDEHVIATTRYGYIHVLENPLATSSEE.

An N-terminal signal peptide occupies residues 1 to 21 (MILGWTQRIFTLLVVVTLLAA). C22 carries the N-palmitoyl cysteine lipid modification. C22 carries S-diacylglycerol cysteine lipidation.

The protein belongs to the BamB family. Part of the Bam complex.

It is found in the cell outer membrane. Its function is as follows. Part of the outer membrane protein assembly complex, which is involved in assembly and insertion of beta-barrel proteins into the outer membrane. The polypeptide is Outer membrane protein assembly factor BamB (Kangiella koreensis (strain DSM 16069 / JCM 12317 / KCTC 12182 / SW-125)).